The sequence spans 279 residues: Phenylalanine 3-hydroxylase (279 aa).

Positions 140, 145, and 186 each coordinate Fe cation.

Belongs to the biopterin-dependent aromatic amino acid hydroxylase family. Requires Fe(2+) as cofactor.

It catalyses the reaction (6R)-L-erythro-5,6,7,8-tetrahydrobiopterin + L-phenylalanine + O2 = 3-hydroxy-L-phenylalanine + (4aS,6R)-4a-hydroxy-L-erythro-5,6,7,8-tetrahydrobiopterin. In vitro, catalyzes the highly regiospecific C-3 hydroxylation of L-phenylalanine (L-Phe) to yield 3-hydroxy-L-phenylalanine (meta-Tyr), an amino acid found in bacterial secondary metabolites such as sanglifehrin A and some pacidamycins. Tetrahydrobiopterin (BH4) seems to be the physiological pterin, however the hydroxylase is also able to use 6-methyltetrahydropterin (6-MePH4). The sequence is that of Phenylalanine 3-hydroxylase from Streptomyces coeruleorubidus.